Reading from the N-terminus, the 71-residue chain is Small ribosomal subunit protein bS21 (71 aa).

This sequence belongs to the bacterial ribosomal protein bS21 family.

The sequence is that of Small ribosomal subunit protein bS21 from Wigglesworthia glossinidia brevipalpis.